We begin with the raw amino-acid sequence, 260 residues long: Ribosomal RNA small subunit methyltransferase A (260 aa).

Residues Leu23, Gly48, Glu69, Asp94, and Asn110 each coordinate S-adenosyl-L-methionine.

This sequence belongs to the class I-like SAM-binding methyltransferase superfamily. rRNA adenine N(6)-methyltransferase family. RsmA subfamily.

The protein localises to the cytoplasm. It catalyses the reaction adenosine(1518)/adenosine(1519) in 16S rRNA + 4 S-adenosyl-L-methionine = N(6)-dimethyladenosine(1518)/N(6)-dimethyladenosine(1519) in 16S rRNA + 4 S-adenosyl-L-homocysteine + 4 H(+). Functionally, specifically dimethylates two adjacent adenosines (A1518 and A1519) in the loop of a conserved hairpin near the 3'-end of 16S rRNA in the 30S particle. May play a critical role in biogenesis of 30S subunits. The chain is Ribosomal RNA small subunit methyltransferase A from Thermotoga neapolitana (strain ATCC 49049 / DSM 4359 / NBRC 107923 / NS-E).